The primary structure comprises 387 residues: 1-deoxy-D-xylulose 5-phosphate reductoisomerase (387 aa).

Residues threonine 10, glycine 11, serine 12, valine 13, asparagine 38, and asparagine 119 each coordinate NADPH. Lysine 120 lines the 1-deoxy-D-xylulose 5-phosphate pocket. Glutamate 121 provides a ligand contact to NADPH. Aspartate 145 provides a ligand contact to Mn(2+). Residues serine 146, glutamate 147, serine 170, and histidine 193 each coordinate 1-deoxy-D-xylulose 5-phosphate. Position 147 (glutamate 147) interacts with Mn(2+). Glycine 199 is a binding site for NADPH. Positions 206, 211, 212, and 215 each coordinate 1-deoxy-D-xylulose 5-phosphate. Glutamate 215 is a binding site for Mn(2+).

It belongs to the DXR family. The cofactor is Mg(2+). Requires Mn(2+) as cofactor.

The catalysed reaction is 2-C-methyl-D-erythritol 4-phosphate + NADP(+) = 1-deoxy-D-xylulose 5-phosphate + NADPH + H(+). It participates in isoprenoid biosynthesis; isopentenyl diphosphate biosynthesis via DXP pathway; isopentenyl diphosphate from 1-deoxy-D-xylulose 5-phosphate: step 1/6. Catalyzes the NADPH-dependent rearrangement and reduction of 1-deoxy-D-xylulose-5-phosphate (DXP) to 2-C-methyl-D-erythritol 4-phosphate (MEP). This Wolbachia sp. subsp. Drosophila simulans (strain wRi) protein is 1-deoxy-D-xylulose 5-phosphate reductoisomerase.